The sequence spans 504 residues: Cytochrome P450 71D8 (504 aa).

Cys444 is a heme binding site.

This sequence belongs to the cytochrome P450 family. The cofactor is heme.

This chain is Cytochrome P450 71D8 (CYP71D8), found in Glycine max (Soybean).